The sequence spans 253 residues: N-acetylmuramoyl-L-alanine amidase CwlM (253 aa).

The MurNAc-LAA domain maps to 4–172 (IFIDPGHGGS…IARGHANGLA (169 aa)). Positions 179–253 (KNAAALYKVQ…AEFDTFIYQE (75 aa)) constitute an SPOR domain. A run of 2 repeats spans residues 184-219 (LYKV…YRDS) and 220-253 (LYKV…IYQE). Positions 184 to 253 (LYKVQIAAFR…AEFDTFIYQE (70 aa)) are 2 X 35 AA approximate tandem repeats.

This sequence belongs to the N-acetylmuramoyl-L-alanine amidase 3 family.

Its subcellular location is the secreted. It catalyses the reaction Hydrolyzes the link between N-acetylmuramoyl residues and L-amino acid residues in certain cell-wall glycopeptides.. Its function is as follows. Hydrolyzes the cell wall of M.luteus more efficiently than that of B.licheniformis and B.subtilis. The C-terminal region, including the repeats, determines substrate specificity. The protein is N-acetylmuramoyl-L-alanine amidase CwlM (cwlM) of Bacillus licheniformis.